A 269-amino-acid polypeptide reads, in one-letter code: Putative pyruvate, phosphate dikinase regulatory protein (269 aa).

151 to 158 is a binding site for ADP; the sequence is GVSRSSKT.

Belongs to the pyruvate, phosphate/water dikinase regulatory protein family. PDRP subfamily.

It carries out the reaction N(tele)-phospho-L-histidyl/L-threonyl-[pyruvate, phosphate dikinase] + ADP = N(tele)-phospho-L-histidyl/O-phospho-L-threonyl-[pyruvate, phosphate dikinase] + AMP + H(+). The enzyme catalyses N(tele)-phospho-L-histidyl/O-phospho-L-threonyl-[pyruvate, phosphate dikinase] + phosphate + H(+) = N(tele)-phospho-L-histidyl/L-threonyl-[pyruvate, phosphate dikinase] + diphosphate. In terms of biological role, bifunctional serine/threonine kinase and phosphorylase involved in the regulation of the pyruvate, phosphate dikinase (PPDK) by catalyzing its phosphorylation/dephosphorylation. This is Putative pyruvate, phosphate dikinase regulatory protein from Geobacter metallireducens (strain ATCC 53774 / DSM 7210 / GS-15).